Reading from the N-terminus, the 517-residue chain is Protein NETWORKED 4B (517 aa).

2 disordered regions span residues 1–29 and 101–159; these read MASSTAQSKKQFKRSMTKKSHSWWWDSHN and LQKN…EDGD. A compositionally biased stretch (basic residues) spans 10-21; sequence KQFKRSMTKKSH. The NAB domain maps to 21–101; sequence HSWWWDSHNC…ERYDQASGEL (81 aa). The segment covering 107–119 has biased composition (low complexity); sequence SEIQSQSSLEISS. Positions 121–135 are enriched in basic and acidic residues; the sequence is TKEKLSRRQSSHKEE. Residues 156 to 486 adopt a coiled-coil conformation; that stretch reads EDGDEALIRR…EQKREAIRQL (331 aa).

It belongs to the NET family.

In terms of biological role, plant-specific actin binding protein. May be part of a membrane-cytoskeletal adapter complex. The polypeptide is Protein NETWORKED 4B (Arabidopsis thaliana (Mouse-ear cress)).